An 85-amino-acid polypeptide reads, in one-letter code: Translational regulator CsrA (85 aa).

The protein belongs to the CsrA/RsmA family. Homodimer; the beta-strands of each monomer intercalate to form a hydrophobic core, while the alpha-helices form wings that extend away from the core.

It localises to the cytoplasm. In terms of biological role, a translational regulator that binds mRNA to regulate translation initiation and/or mRNA stability. Usually binds in the 5'-UTR at or near the Shine-Dalgarno sequence preventing ribosome-binding, thus repressing translation. Its main target seems to be the major flagellin gene, while its function is anatagonized by FliW. This is Translational regulator CsrA from Leifsonia xyli subsp. xyli (strain CTCB07).